A 162-amino-acid chain; its full sequence is Beta-lactoglobulin (162 aa).

3 disulfide bridges follow: Cys-66/Cys-160, Cys-106/Cys-119, and Cys-106/Cys-121.

It belongs to the calycin superfamily. Lipocalin family. As to quaternary structure, under physiological conditions beta-lactoglobulin exists as an equilibrium mixture of monomeric and dimeric forms. Post-translationally, alternate disulfide bonds occur in equal amounts.

The protein resides in the secreted. Lactoglobulin is the primary component of whey, it binds retinol and is probably involved in the transport of that molecule. This chain is Beta-lactoglobulin (LGB), found in Ovis aries musimon (Mouflon).